We begin with the raw amino-acid sequence, 128 residues long: Sulfurtransferase TusD (128 aa).

Cys78 (cysteine persulfide intermediate) is an active-site residue.

The protein belongs to the DsrE/TusD family. As to quaternary structure, heterohexamer, formed by a dimer of trimers. The hexameric TusBCD complex contains 2 copies each of TusB, TusC and TusD. The TusBCD complex interacts with TusE.

The protein localises to the cytoplasm. In terms of biological role, part of a sulfur-relay system required for 2-thiolation of 5-methylaminomethyl-2-thiouridine (mnm(5)s(2)U) at tRNA wobble positions. Accepts sulfur from TusA and transfers it in turn to TusE. This chain is Sulfurtransferase TusD, found in Cronobacter sakazakii (strain ATCC BAA-894) (Enterobacter sakazakii).